We begin with the raw amino-acid sequence, 144 residues long: 3-hydroxyacyl-[acyl-carrier-protein] dehydratase FabZ (144 aa).

Histidine 48 is an active-site residue.

The protein belongs to the thioester dehydratase family. FabZ subfamily.

It localises to the cytoplasm. It carries out the reaction a (3R)-hydroxyacyl-[ACP] = a (2E)-enoyl-[ACP] + H2O. Functionally, involved in unsaturated fatty acids biosynthesis. Catalyzes the dehydration of short chain beta-hydroxyacyl-ACPs and long chain saturated and unsaturated beta-hydroxyacyl-ACPs. The polypeptide is 3-hydroxyacyl-[acyl-carrier-protein] dehydratase FabZ (Listeria welshimeri serovar 6b (strain ATCC 35897 / DSM 20650 / CCUG 15529 / CIP 8149 / NCTC 11857 / SLCC 5334 / V8)).